The primary structure comprises 128 residues: Probable 4-amino-4-deoxy-L-arabinose-phosphoundecaprenol flippase subunit ArnF (128 aa).

Residues 1–21 traverse the membrane as a helical segment; sequence MGLMWGLFSVIIASAAQLSLG. The Periplasmic portion of the chain corresponds to 22–35; the sequence is YAASHLPPMTQFWD. A helical transmembrane segment spans residues 36–56; the sequence is FIAAFFAFGPGARMLVVGLVG. The Cytoplasmic portion of the chain corresponds to 57 to 76; it reads YLLSVFCWYKALHQLALSKA. Residues 77 to 97 traverse the membrane as a helical segment; it reads YALLSMSYVLVWIASMVLPGW. Residues 98–100 are Periplasmic-facing; it reads EGT. Residues 101–121 form a helical membrane-spanning segment; the sequence is FSLKALLGVACIMSGLMLIFL. The Cytoplasmic segment spans residues 122–128; sequence PTTKQRY.

Belongs to the ArnF family. Heterodimer of ArnE and ArnF.

The protein localises to the cell inner membrane. Its pathway is bacterial outer membrane biogenesis; lipopolysaccharide biosynthesis. Translocates 4-amino-4-deoxy-L-arabinose-phosphoundecaprenol (alpha-L-Ara4N-phosphoundecaprenol) from the cytoplasmic to the periplasmic side of the inner membrane. In Escherichia fergusonii (strain ATCC 35469 / DSM 13698 / CCUG 18766 / IAM 14443 / JCM 21226 / LMG 7866 / NBRC 102419 / NCTC 12128 / CDC 0568-73), this protein is Probable 4-amino-4-deoxy-L-arabinose-phosphoundecaprenol flippase subunit ArnF.